The following is a 509-amino-acid chain: Solute carrier family 2, facilitated glucose transporter member 4 (509 aa).

At 1–24 the chain is on the cytoplasmic side; the sequence is MPSGFQQIGSEDGEPPQQRVTGTL. Positions 7 to 13 are interaction with SRFBP1; that stretch reads QIGSEDG. The residue at position 10 (Ser-10) is a Phosphoserine. The helical transmembrane segment at 25-45 threads the bilayer; sequence VLAVFSAVLGSLQFGYNIGVI. Residues 46–81 lie on the Extracellular side of the membrane; sequence NAPQKVIEQSYNETWLGRQGPEGPSSIPPGTLTTLW. Asn-57 carries an N-linked (GlcNAc...) asparagine glycan. Residues 82 to 102 traverse the membrane as a helical segment; that stretch reads ALSVAIFSVGGMISSFLIGII. The Cytoplasmic portion of the chain corresponds to 103–111; that stretch reads SQWLGRKRA. The helical transmembrane segment at 112 to 132 threads the bilayer; it reads MLVNNVLAVLGGSLMGLANAA. The Extracellular portion of the chain corresponds to 133 to 142; sequence ASYEMLILGR. The helical transmembrane segment at 143 to 163 threads the bilayer; sequence FLIGAYSGLTSGLVPMYVGEI. The Cytoplasmic segment spans residues 164–171; the sequence is APTHLRGA. A helical transmembrane segment spans residues 172-192; that stretch reads LGTLNQLAIVIGILIAQVLGL. Gln-177 serves as a coordination point for D-glucose. Residues 193-201 lie on the Extracellular side of the membrane; that stretch reads ESLLGTASL. Residues 202 to 222 form a helical membrane-spanning segment; the sequence is WPLLLGLTVLPALLQLVLLPF. Cys-223 carries the S-palmitoyl cysteine lipid modification. Topologically, residues 223–287 are cytoplasmic; that stretch reads CPESPRYLYI…LLGSRTHRQP (65 aa). The residue at position 274 (Ser-274) is a Phosphoserine; by SGK1. A helical transmembrane segment spans residues 288–308; sequence LIIAVVLQLSQQLSGINAVFY. D-glucose-binding positions include 298 to 299 and Asn-304; that span reads QQ. Topologically, residues 309-323 are extracellular; sequence YSTSIFETAGVGQPA. A helical transmembrane segment spans residues 324–344; sequence YATIGAGVVNTVFTLVSVLLV. D-glucose is bound at residue Asn-333. Topologically, residues 345–353 are cytoplasmic; the sequence is ERAGRRTLH. A helical membrane pass occupies residues 354 to 374; it reads LLGLAGMCGCAILMTVALLLL. At 375–384 the chain is on the extracellular side; the sequence is ERVPAMSYVS. The chain crosses the membrane as a helical span at residues 385–405; the sequence is IVAIFGFVAFFEIGPGPIPWF. D-glucose-binding residues include Glu-396 and Trp-404. Topologically, residues 406–417 are cytoplasmic; that stretch reads IVAELFSQGPRP. A helical transmembrane segment spans residues 418 to 438; that stretch reads AAMAVAGFSNWTSNFIIGMGF. The Extracellular segment spans residues 439 to 445; the sequence is QYVAEAM. The chain crosses the membrane as a helical span at residues 446–466; the sequence is GPYVFLLFAVLLLGFFIFTFL. Topologically, residues 467–509 are cytoplasmic; that stretch reads RVPETRGRTFDQISAAFHRTPSLLEQEVKPSTELEYLGPDEND. A Phosphothreonine modification is found at Thr-486. Ser-488 is modified (phosphoserine). The Dileucine internalization motif motif lies at 489–490; sequence LL.

It belongs to the major facilitator superfamily. Sugar transporter (TC 2.A.1.1) family. Glucose transporter subfamily. Interacts with NDUFA9. Binds to DAXX. Interacts via its N-terminus with SRFBP1. Interacts with TRARG1; the interaction is required for proper SLC2A4 recycling after insulin stimulation. Sumoylated. Post-translationally, palmitoylated. Palmitoylation by ZDHHC7 controls the insulin-dependent translocation of GLUT4 to the plasma membrane. As to expression, skeletal and cardiac muscles; brown and white fat.

It is found in the cell membrane. The protein resides in the endomembrane system. It localises to the cytoplasm. The protein localises to the perinuclear region. The catalysed reaction is D-glucose(out) = D-glucose(in). Functionally, insulin-regulated facilitative glucose transporter, which plays a key role in removal of glucose from circulation. Response to insulin is regulated by its intracellular localization: in the absence of insulin, it is efficiently retained intracellularly within storage compartments in muscle and fat cells. Upon insulin stimulation, translocates from these compartments to the cell surface where it transports glucose from the extracellular milieu into the cell. The polypeptide is Solute carrier family 2, facilitated glucose transporter member 4 (Homo sapiens (Human)).